The primary structure comprises 501 residues: MVRKPVVSTISKGGYLQGNVNGRLPSLGNKEPPGQEKVQLKRKVTLLRGVSIIIGTIIGAGIFISPKGVLQNTGSVGMSLTIWTVCGVLSLFGALSYAELGTTIKKSGGHYTYILEVFGPLPAFVRVWVELLIIRPAATAVISLAFGRYILEPFFIQCEIPELAIKLITAVGITVVMVLNSMSVSWSARIQIFLTFCKLTAILIIIVPGVMQLIKGQTQNFKDAFSGRDSSITRLPLAFYYGMYAYAGWFYLNFVTEEVENPEKTIPLAICISMAIVTIGYVLTNVAYFTTINAEELLLSNAVAVTFSERLLGNFSLAVPIFVALSCFGSMNGGVFAVSRLFYVASREGHLPEILSMIHVRKHTPLPAVIVLHPLTMIMLFSGDLDSLLNFLSFARWLFIGLAVAGLIYLRYKCPDMHRPFKVPLFIPALFSFTCLFMVALSLYSDPFSTGIGSVITLTGVPAYYLFIIWDKKPRWFRIMSEKITRTLQIILEVVPEEDKL.

The Cytoplasmic segment spans residues 1–43 (MVRKPVVSTISKGGYLQGNVNGRLPSLGNKEPPGQEKVQLKRK). S26 is modified (phosphoserine). Residues 44-64 (VTLLRGVSIIIGTIIGAGIFI) traverse the membrane as a helical segment. The Extracellular portion of the chain corresponds to 65 to 74 (SPKGVLQNTG). A helical membrane pass occupies residues 75–95 (SVGMSLTIWTVCGVLSLFGAL). Over 96 to 101 (SYAELG) the chain is Cytoplasmic. The stretch at 102–116 (TTIKKSGGHYTYILE) is an intramembrane region. Residues 117-130 (VFGPLPAFVRVWVE) lie on the Cytoplasmic side of the membrane. A helical membrane pass occupies residues 131 to 150 (LLIIRPAATAVISLAFGRYI). Residue R135 participates in L-glutamate binding. The Extracellular portion of the chain corresponds to 151–163 (LEPFFIQCEIPEL). A helical transmembrane segment spans residues 164 to 179 (AIKLITAVGITVVMVL). The Cytoplasmic portion of the chain corresponds to 180–193 (NSMSVSWSARIQIF). Residues 194-210 (LTFCKLTAILIIIVPGV) traverse the membrane as a helical segment. The Extracellular segment spans residues 211–234 (MQLIKGQTQNFKDAFSGRDSSITR). The helical transmembrane segment at 235-255 (LPLAFYYGMYAYAGWFYLNFV) threads the bilayer. Y244 is a binding site for L-glutamate. Residues 256 to 265 (TEEVENPEKT) lie on the Cytoplasmic side of the membrane. Residues 266–286 (IPLAICISMAIVTIGYVLTNV) traverse the membrane as a helical segment. Topologically, residues 287-317 (AYFTTINAEELLLSNAVAVTFSERLLGNFSL) are extracellular. An N-linked (GlcNAc...) asparagine glycan is attached at N314. A helical transmembrane segment spans residues 318–338 (AVPIFVALSCFGSMNGGVFAV). The Cytoplasmic segment spans residues 339-364 (SRLFYVASREGHLPEILSMIHVRKHT). The helical transmembrane segment at 365 to 385 (PLPAVIVLHPLTMIMLFSGDL) threads the bilayer. Topologically, residues 386–387 (DS) are extracellular. Residues 388–408 (LLNFLSFARWLFIGLAVAGLI) traverse the membrane as a helical segment. Topologically, residues 409 to 422 (YLRYKCPDMHRPFK) are cytoplasmic. Residues 423-443 (VPLFIPALFSFTCLFMVALSL) form a helical membrane-spanning segment. The Extracellular portion of the chain corresponds to 444–449 (YSDPFS). A helical membrane pass occupies residues 450–470 (TGIGSVITLTGVPAYYLFIIW). The Cytoplasmic portion of the chain corresponds to 471 to 501 (DKKPRWFRIMSEKITRTLQIILEVVPEEDKL).

It belongs to the amino acid-polyamine-organocation (APC) superfamily. L-type amino acid transporter (LAT) (TC 2.A.3.8) family. In terms of assembly, disulfide-linked heterodimer with the amino acid transport protein SLC3A2/4F2hc; this interaction mediates cell membrane localization.

Its subcellular location is the cell membrane. The protein resides in the cell projection. The protein localises to the microvillus membrane. It carries out the reaction L-cystine(out) + L-glutamate(in) = L-cystine(in) + L-glutamate(out). The enzyme catalyses an L-alpha-amino acid(in) + L-kynurenine(out) = an L-alpha-amino acid(out) + L-kynurenine(in). It catalyses the reaction N-acetyl-L-cysteine(out) + L-glutamate(in) = N-acetyl-L-cysteine(in) + L-glutamate(out). Its function is as follows. Heterodimer with SLC3A2, that functions as an antiporter by mediating the exchange of extracellular anionic L-cystine and intracellular L-glutamate across the cellular plasma membrane. Provides L-cystine for the maintenance of the redox balance between extracellular L-cystine and L-cysteine and for the maintenance of the intracellular levels of glutathione that is essential for cells protection from oxidative stress. The transport is sodium-independent, electroneutral with a stoichiometry of 1:1, and is drove by the high intracellular concentration of L-glutamate and the intracellular reduction of L-cystine. In addition, mediates the import of L-kynurenine leading to anti-ferroptotic signaling propagation required to maintain L-cystine and glutathione homeostasis. Moreover, mediates N-acetyl-L-cysteine uptake into the placenta leading to subsequently down-regulation of pathways associated with oxidative stress, inflammation and apoptosis. In vitro can also transport L-aspartate. May participate in astrocyte and meningeal cell proliferation during development and can provide neuroprotection by promoting glutathione synthesis and delivery from non-neuronal cells such as astrocytes and meningeal cells to immature neurons. Controls the production of pheomelanin pigment directly. This Pongo abelii (Sumatran orangutan) protein is Cystine/glutamate transporter.